We begin with the raw amino-acid sequence, 289 residues long: RING-H2 finger protein ATL29 (289 aa).

The chain crosses the membrane as a helical span at residues 25–45; it reads VILTVILLVFFFIGFFTLYFC. The RING-type; atypical zinc finger occupies 110-152; sequence CAICLLEFDGDHVLRLLTTCYHVFHQECIDLWFESHRTCPVCR. The disordered stretch occupies residues 179–237; it reads TSDDEEDDHHRQQTTTQIDTWPSSGQTSSIKKEQNLPEKFSRSHSTGHSIVRNKPEEED. Residues 191-207 are compositionally biased toward polar residues; it reads QTTTQIDTWPSSGQTSS. Positions 208-219 are enriched in basic and acidic residues; the sequence is IKKEQNLPEKFS.

Belongs to the RING-type zinc finger family. ATL subfamily.

The protein resides in the membrane. It catalyses the reaction S-ubiquitinyl-[E2 ubiquitin-conjugating enzyme]-L-cysteine + [acceptor protein]-L-lysine = [E2 ubiquitin-conjugating enzyme]-L-cysteine + N(6)-ubiquitinyl-[acceptor protein]-L-lysine.. Its pathway is protein modification; protein ubiquitination. The chain is RING-H2 finger protein ATL29 (ATL29) from Arabidopsis thaliana (Mouse-ear cress).